We begin with the raw amino-acid sequence, 95 residues long: Aspartyl/glutamyl-tRNA(Asn/Gln) amidotransferase subunit C (95 aa).

This sequence belongs to the GatC family. As to quaternary structure, heterotrimer of A, B and C subunits.

It catalyses the reaction L-glutamyl-tRNA(Gln) + L-glutamine + ATP + H2O = L-glutaminyl-tRNA(Gln) + L-glutamate + ADP + phosphate + H(+). The enzyme catalyses L-aspartyl-tRNA(Asn) + L-glutamine + ATP + H2O = L-asparaginyl-tRNA(Asn) + L-glutamate + ADP + phosphate + 2 H(+). In terms of biological role, allows the formation of correctly charged Asn-tRNA(Asn) or Gln-tRNA(Gln) through the transamidation of misacylated Asp-tRNA(Asn) or Glu-tRNA(Gln) in organisms which lack either or both of asparaginyl-tRNA or glutaminyl-tRNA synthetases. The reaction takes place in the presence of glutamine and ATP through an activated phospho-Asp-tRNA(Asn) or phospho-Glu-tRNA(Gln). The sequence is that of Aspartyl/glutamyl-tRNA(Asn/Gln) amidotransferase subunit C from Nitrobacter hamburgensis (strain DSM 10229 / NCIMB 13809 / X14).